A 1175-amino-acid polypeptide reads, in one-letter code: Solute carrier family 9 member C1 (1175 aa).

Over 1 to 39 (MEMEEISENLTASHSIKLTNMWLELLKSVFLSTPQDLPE) the chain is Extracellular. The helical transmembrane segment at 40-59 (IILILSLICTVGAFLNMHLK) threads the bilayer. Residues 60–64 (DFPIP) lie on the Cytoplasmic side of the membrane. The chain crosses the membrane as a helical span at residues 65–82 (LPVILFLIGCCFEILSFA). The Extracellular segment spans residues 83–98 (STQIQIYADAIQWMDP). Residues 99–115 (DIFFGIFTPVIIFNVAF) traverse the membrane as a helical segment. Residues 116 to 125 (DMDIYMLQKL) are Cytoplasmic-facing. A helical transmembrane segment spans residues 126–151 (FWQILVITIPGFLINYTLILWYLQSV). Positions 126 to 213 (FWQILVITIP…SLVIYSGVVH (88 aa)) are transport core domain. Over 152–157 (NKLSLK) the chain is Extracellular. The chain crosses the membrane as a helical span at residues 158–183 (TVPWLLFSAVLISSDPMLTSASIRDL). At 184-186 (GLS) the chain is on the cytoplasmic side. A helical membrane pass occupies residues 187-212 (RSLTNLINGESLLTSVLSLVIYSGVV). At 213 to 225 (HIRFKSKSVNHTL) the chain is on the extracellular side. Residues 226–257 (AHKVMSTAWSYIVESFITGIVFTKVIQLWMAT) traverse the membrane as a helical segment. Over 258-261 (IFGD) the chain is Cytoplasmic. A helical membrane pass occupies residues 262 to 283 (DVNHITLIFSVLYLIFYVCELV). At 284–286 (GMS) the chain is on the extracellular side. A helical transmembrane segment spans residues 287–300 (GIFTLATIGLFLNS). The Cytoplasmic portion of the chain corresponds to 301–307 (TSFKPGV). A helical transmembrane segment spans residues 308-339 (EAFLLEFWNCLSFIGFLMVFTFIGLLIPAHTY). Residues 340–344 (LHISF) are Extracellular-facing. Residues 345–374 (SDVYYSLNIYFTLIVLRLLVFLLMSPILSR) form a helical membrane-spanning segment. The tract at residues 345–446 (SDVYYSLNIY…FILPMAVTKL (102 aa)) is transport core domain. Residues 375 to 380 (LGHGFS) are Cytoplasmic-facing. The helical transmembrane segment at 381-411 (WRWAFIMVWSEMKGTPNINMALLLAYSDISL) threads the bilayer. Residues 412–415 (GSER) lie on the Extracellular side of the membrane. A helical membrane pass occupies residues 416–446 (ERSQILFHGVSVCVITLIVNRFILPMAVTKL). Residues 447–632 (GLRDVTSTKY…ACHRIVFTNE (186 aa)) lie on the Cytoplasmic side of the membrane. Positions 618 to 698 (YMFLHACHRI…EFFSHTWLLF (81 aa)) are ion transport-like. A helical transmembrane segment spans residues 633–653 (FEYTGYLVVLMSTYPMIICWI). The Extracellular portion of the chain corresponds to 654 to 657 (SRLK). Residues 658–684 (DIYDNEIKCANYYFLAFYILEALLKVA) form a helical membrane-spanning segment. Over 685–691 (AMRKEFF) the chain is Cytoplasmic. A helical membrane pass occupies residues 692–716 (SHTWLLFELGITLVGVLDIILIETD). Topologically, residues 717–724 (SISYNFDL) are extracellular. The chain crosses the membrane as a helical span at residues 725-751 (TETVVFMNVIRLLRILRILKLVTPKLL). The Cytoplasmic segment spans residues 752 to 1175 (QIIDKRMSQQ…EELIEENINI (424 aa)). Positions 1137–1146 (MKPDSERESF) are enriched in basic and acidic residues. Residues 1137–1175 (MKPDSERESFETLDETSEEDNGKKENQENEELIEENINI) are disordered. The span at 1164–1175 (ENEELIEENINI) shows a compositional bias: acidic residues.

Belongs to the monovalent cation:proton antiporter 1 (CPA1) transporter (TC 2.A.36) family. As to quaternary structure, interacts with soluble adenylyl cyclase (sAC). In terms of tissue distribution, testis-specific. Specifically present in the principal piece of sperm tail (at protein level).

It is found in the cell projection. It localises to the cilium. Its subcellular location is the flagellum membrane. Its function is as follows. Sperm-specific solute carrier involved in intracellular pH regulation of spermatozoa. Required for sperm motility and fertility. Involved in sperm cell hyperactivation, a step needed for sperm motility which is essential late in the preparation of sperm for fertilization. Required for the expression and bicarbonate regulation of the soluble adenylyl cyclase (sAC). The protein is Solute carrier family 9 member C1 (Slc9c1) of Mus musculus (Mouse).